Consider the following 50-residue polypeptide: Conotoxin Cal6.19 (50 aa).

An N-terminal signal peptide occupies residues 1 to 22 (MKVTCVLVLTLMALTVCQVATA). 3 disulfides stabilise this stretch: Cys-24–Cys-37, Cys-30–Cys-41, and Cys-36–Cys-46.

Expressed by the venom duct.

Its subcellular location is the secreted. Its function is as follows. Probable neurotoxin. The sequence is that of Conotoxin Cal6.19 from Californiconus californicus (California cone).